The primary structure comprises 313 residues: Nodulation protein D 3 (313 aa).

The HTH lysR-type domain maps to 6 to 63; that stretch reads LDLNLLVALDALMTKRSVTAAARSINLSQPAMSSAIARLRSYFQDELFRMQGRELITT. Residues 23 to 42 constitute a DNA-binding region (H-T-H motif); sequence VTAAARSINLSQPAMSSAIA.

The protein belongs to the LysR transcriptional regulatory family.

Functionally, nodD regulates the expression of the nodABCFE genes which encode other nodulation proteins. NodD is also a negative regulator of its own expression. Binds flavonoids as inducers. This chain is Nodulation protein D 3 (nodD3), found in Rhizobium meliloti (strain 1021) (Ensifer meliloti).